Reading from the N-terminus, the 48-residue chain is Large ribosomal subunit protein bL33A (48 aa).

This sequence belongs to the bacterial ribosomal protein bL33 family.

The chain is Large ribosomal subunit protein bL33A from Shouchella clausii (strain KSM-K16) (Alkalihalobacillus clausii).